The chain runs to 88 residues: Small ribosomal subunit protein bS20 (88 aa).

Residues 1-12 show a composition bias toward basic residues; it reads MANHKSALKRAK. The tract at residues 1–23 is disordered; sequence MANHKSALKRAKQNTIKQMRNRS.

Belongs to the bacterial ribosomal protein bS20 family.

Binds directly to 16S ribosomal RNA. The sequence is that of Small ribosomal subunit protein bS20 from Desulfatibacillum aliphaticivorans.